The following is a 102-amino-acid chain: Small ribosomal subunit protein uS10 (102 aa).

This sequence belongs to the universal ribosomal protein uS10 family. Part of the 30S ribosomal subunit.

Its function is as follows. Involved in the binding of tRNA to the ribosomes. In Chloroflexus aurantiacus (strain ATCC 29366 / DSM 635 / J-10-fl), this protein is Small ribosomal subunit protein uS10.